The primary structure comprises 1249 residues: Fanconi anemia group J protein (1249 aa).

The region spanning 11–442 (GGVKIYFPYK…KDHEPLRAVC (432 aa)) is the Helicase ATP-binding domain. Residues 102–127 (QGTSRHFNYPSTPPSERNGTSSTCQD) are compositionally biased toward polar residues. A disordered region spans residues 102–131 (QGTSRHFNYPSTPPSERNGTSSTCQDSPEK). The Nuclear localization signal signature appears at 158–175 (KKRIRPLETTQQIRKRHC). An ATP-binding site is contributed by 185-192 (AKVDSGKT). Residues Cys-283, Cys-298, Cys-310, and Cys-350 each coordinate [4Fe-4S] cluster. The DEAH box motif lies at 393–396 (DEAH). Residues Ser-505, Ser-927, Ser-930, Ser-956, Ser-990, Ser-1004, and Ser-1032 each carry the phosphoserine modification. The segment at 888–1063 (HQKVLNVSIK…ESSNLTVNTS (176 aa)) is interaction with BRCA1. Disordered regions lie at residues 1018 to 1042 (KATP…EKME) and 1108 to 1127 (VSEE…EAED). Residues 1023–1032 (LGSSENSASS) show a composition bias toward polar residues. Residues 1110 to 1122 (EEDKQSTSNRDFE) show a composition bias toward basic and acidic residues. A Phosphoserine modification is found at Ser-1237. Lys-1249 carries the N6-acetyllysine modification.

It belongs to the DEAD box helicase family. DEAH subfamily. Interacts with the replication protein A complex (RPA) via the RPA1 subunit; following DNA damage they colocalize in foci in the nucleus. Binds directly to the BRCT domains of BRCA1. Interacts with the CIA complex components CIAO1, CIAO2B and MMS19. [4Fe-4S] cluster is required as a cofactor. Phosphorylated. Phosphorylation is necessary for interaction with BRCA1, and is cell-cycle regulated. In terms of processing, acetylation at Lys-1249 facilitates DNA end processing required for repair and checkpoint signaling. In terms of tissue distribution, ubiquitously expressed, with highest levels in testis.

The protein localises to the nucleus. The protein resides in the cytoplasm. It catalyses the reaction Couples ATP hydrolysis with the unwinding of duplex DNA at the replication fork by translocating in the 5'-3' direction. This creates two antiparallel DNA single strands (ssDNA). The leading ssDNA polymer is the template for DNA polymerase III holoenzyme which synthesizes a continuous strand.. It carries out the reaction ATP + H2O = ADP + phosphate + H(+). Helicase activity on forked substrates is stimulated by replication protein A complex heterotrimer (RPA1, RPA2, RPA3). Helicase activity on G-quadruplex DNA is stimulated 3-fold by RPA, and inhibited by MSH2/MSH6. Unwinding of G-quadruplex DNA is inhibited by ATP-gamma-S and telomestatin (TMS); TMA does not inhibit unwinding of forked-duplex DNA. Helicase activity on dsDNA and G-quadruplex DNA is inhibited by porphyrin derivatives meso-tetra (N-methyl-4-pyridyl) porphine tetra tosylate (T4) and N-methyl mesoporphyrin IX (NMM). Functionally, DNA-dependent ATPase and 5'-3' DNA helicase required for the maintenance of chromosomal stability. Acts late in the Fanconi anemia pathway, after FANCD2 ubiquitination. Involved in the repair of DNA double-strand breaks by homologous recombination in a manner that depends on its association with BRCA1. Involved in the repair of abasic sites at replication forks by promoting the degradation of DNA-protein cross-links: acts by catalyzing unfolding of HMCES DNA-protein cross-link via its helicase activity, exposing the underlying DNA and enabling cleavage of the DNA-protein adduct by the SPRTN metalloprotease. Can unwind RNA:DNA substrates. Unwinds G-quadruplex DNA; unwinding requires a 5'-single stranded tail. The polypeptide is Fanconi anemia group J protein (Homo sapiens (Human)).